The following is a 98-amino-acid chain: Protein S100-A11 (98 aa).

Thr5 carries the post-translational modification Phosphothreonine. EF-hand domains lie at Leu12–Lys47 and Lys50–Ala85. Residue Lys22 is modified to N6-acetyllysine. Ca(2+) is bound by residues Ser26, His28, Glu33, Asp63, Asn65, Asp67, Gln69, and Glu74.

Belongs to the S-100 family. As to quaternary structure, homodimer; disulfide-linked. Post-translationally, phosphorylation at Thr-5 significantly suppresses homodimerization and promotes association with NCL/nucleolin which induces nuclear translocation.

Its subcellular location is the cytoplasm. The protein localises to the nucleus. Its function is as follows. Facilitates the differentiation and the cornification of keratinocytes. The sequence is that of Protein S100-A11 (S100a11) from Rattus norvegicus (Rat).